Here is a 310-residue protein sequence, read N- to C-terminus: Mitochondrial citrate transporter F (310 aa).

3 Solcar repeats span residues 23–108 (KKVH…LKNH), 115–207 (PPGL…FKRL), and 216–303 (DNMG…HKKL). A run of 6 helical transmembrane segments spans residues 29-49 (FWFG…LDLV), 85-105 (SAAI…YEEL), 122-142 (IGMA…ADVL), 186-206 (NSTR…TFKR), 222-242 (FTAS…VDVI), and 275-296 (AFRG…TFIF).

This sequence belongs to the mitochondrial carrier (TC 2.A.29) family.

The protein localises to the mitochondrion inner membrane. In terms of biological role, mitochondrial transporter that does not mediate citrate export from mitochondria to cytoplasm. Its exact function has still to be determined. The chain is Mitochondrial citrate transporter F from Aspergillus niger (strain ATCC 1015 / CBS 113.46 / FGSC A1144 / LSHB Ac4 / NCTC 3858a / NRRL 328 / USDA 3528.7).